A 184-amino-acid chain; its full sequence is ATP synthase subunit delta (184 aa).

Belongs to the ATPase delta chain family. In terms of assembly, F-type ATPases have 2 components, F(1) - the catalytic core - and F(0) - the membrane proton channel. F(1) has five subunits: alpha(3), beta(3), gamma(1), delta(1), epsilon(1). F(0) has three main subunits: a(1), b(2) and c(10-14). The alpha and beta chains form an alternating ring which encloses part of the gamma chain. F(1) is attached to F(0) by a central stalk formed by the gamma and epsilon chains, while a peripheral stalk is formed by the delta and b chains.

The protein resides in the cell inner membrane. Its function is as follows. F(1)F(0) ATP synthase produces ATP from ADP in the presence of a proton or sodium gradient. F-type ATPases consist of two structural domains, F(1) containing the extramembraneous catalytic core and F(0) containing the membrane proton channel, linked together by a central stalk and a peripheral stalk. During catalysis, ATP synthesis in the catalytic domain of F(1) is coupled via a rotary mechanism of the central stalk subunits to proton translocation. Functionally, this protein is part of the stalk that links CF(0) to CF(1). It either transmits conformational changes from CF(0) to CF(1) or is implicated in proton conduction. The sequence is that of ATP synthase subunit delta from Rhizorhabdus wittichii (strain DSM 6014 / CCUG 31198 / JCM 15750 / NBRC 105917 / EY 4224 / RW1) (Sphingomonas wittichii).